The primary structure comprises 724 residues: Solute carrier organic anion transporter family member 4C1 (724 aa).

Residues 1–105 (MKSAKGIENL…QCLQRCNTPG (105 aa)) lie on the Cytoplasmic side of the membrane. Ser-15, Ser-16, Ser-24, Ser-26, and Ser-28 each carry phosphoserine. The tract at residues 24 to 71 (SASPSQVEVSALSSDPQRENSQPQELQKPQEPQKSPEPSLPSAPPNVS) is disordered. Residues 25-38 (ASPSQVEVSALSSD) are compositionally biased toward polar residues. Residues 44-60 (SQPQELQKPQEPQKSPE) are compositionally biased toward low complexity. A helical transmembrane segment spans residues 106-126 (GFLLHYCLLAVTQGIVVNGLV). Residues 127 to 145 (NISISTIEKRYEMKSSLTG) lie on the Extracellular side of the membrane. A helical membrane pass occupies residues 146 to 166 (LISSSYDISFCLLSLFVSFFG). Residues 167–172 (ERGHKP) are Cytoplasmic-facing. The chain crosses the membrane as a helical span at residues 173 to 197 (RWLAFAAFMIGLGALVFSLPQFFSG). The Extracellular portion of the chain corresponds to 198 to 224 (EYKLGSLFEDTCVTTRNSTSCTSSTSS). Residues 225 to 254 (LSNYLYVFILGQLLLGAGGTPLYTLGTAFL) form a helical membrane-spanning segment. Residues 255 to 274 (DDSVPTHKSSLYIGTGYAMS) are Cytoplasmic-facing. A helical membrane pass occupies residues 275–295 (ILGPAIGYVLGGQLLTIYVDV). Over 296–311 (AMGESTDITEDDPRWL) the chain is Extracellular. The helical transmembrane segment at 312–336 (GAWWIGFLLSWIFAWSLIIPFSCFP) threads the bilayer. The Cytoplasmic segment spans residues 337-377 (KHLPGTAEIQAGKTSQAHQSNSNADAKFGKSIKDFPAALKN). Residues 378–399 (LMKNAVFMCLVLSTSSEALITT) traverse the membrane as a helical segment. Topologically, residues 400–419 (GFATFLPKFIENQFGLTSSF) are extracellular. Residues 420 to 443 (AATLGGAVLIPGAALGQILGGFLV) form a helical membrane-spanning segment. The Cytoplasmic segment spans residues 444–447 (SKFK). The helical transmembrane segment at 448–471 (MTCKNTMKFALFTSGVALTLSFVF) threads the bilayer. At 472-580 (IYAKCGNEPF…ETHCAKLPIF (109 aa)) the chain is on the extracellular side. Residues 495-549 (GNLIAPCNANCNCLRSYYYPVCGDGVQYFSPCFAGCSNSVAHRKPKVYYNCSCIE) form the Kazal-like domain. Disulfide bonds link Cys-501/Cys-530, Cys-507/Cys-526, and Cys-516/Cys-547. The helical transmembrane segment at 581 to 603 (LCIFFIVIIFTFMAGTPITVSIL) threads the bilayer. The Cytoplasmic portion of the chain corresponds to 604 to 612 (RCVNHRQRS). The helical transmembrane segment at 613-638 (LALGIQFMVLRLLGTIPGPIIFGFTI) threads the bilayer. Residues 639–672 (DSTCILWDINDCGIKGACRIYDNIKMAHMLVAIS) lie on the Extracellular side of the membrane. Residues 673–690 (VTCKVITMFFNGFAIFLY) form a helical membrane-spanning segment. Over 691–724 (KPPPSATDLSFHKENAVVTNVLAEQDLNKIVKEG) the chain is Cytoplasmic.

This sequence belongs to the organo anion transporter (TC 2.A.60) family.

Its subcellular location is the basolateral cell membrane. It catalyses the reaction estrone 3-sulfate(out) = estrone 3-sulfate(in). It carries out the reaction L-thyroxine(out) = L-thyroxine(in). The enzyme catalyses 3,3',5-triiodo-L-thyronine(out) = 3,3',5-triiodo-L-thyronine(in). The catalysed reaction is chenodeoxycholate(out) = chenodeoxycholate(in). It catalyses the reaction glycocholate(out) = glycocholate(in). It carries out the reaction L-homoarginine(in) = L-homoarginine(out). The enzyme catalyses L-arginine(in) = L-arginine(out). The catalysed reaction is N(omega),N(omega)-dimethyl-L-arginine(out) = N(omega),N(omega)-dimethyl-L-arginine(in). Its function is as follows. Mediates the transport of organic anions such as steroids (estrone 3-sulfate, chenodeoxycholate, glycocholate) and thyroid hormones (3,3',5-triiodo-L-thyronine (T3), L-thyroxine (T4)), in the kidney. Capable of transporting cAMP and pharmacological substances such as digoxin, ouabain and methotrexate. Transport is independent of sodium, chloride ion, and ATP. Transport activity is stimulated by an acidic extracellular environment due to increased substrate affinity to the transporter. The driving force for this transport activity is currently not known. The role of hydrogencarbonate (HCO3(-), bicarbonate) as the probable counteranion that exchanges for organic anions is still not well defined. Functions as an uptake transporter at the apical membrane, suggesting a role in renal reabsorption. Involved in the renal secretion of the uremic toxin ADMA (N(omega),N(omega)-dimethyl-L-arginine or asymmetrical dimethylarginine), which is associated to cardiovascular events and mortality, and the structurally related amino acids L-arginine and L-homoarginine (a cardioprotective biomarker). Can act bidirectionally, suggesting a dual protective role of this transport protein; exporting L-homoarginine after being synthesized in proximal tubule cells, and mediating uptake of ADMA from the blood into proximal tubule cells where it is degraded by the enzyme dimethylarginine dimethylaminohydrolase 1 (DDAH1). May be involved in sperm maturation by enabling directed movement of organic anions and compounds within or between cells. This ion-transporting process is important to maintain the strict epididymal homeostasis necessary for sperm maturation. May have a role in secretory functions since seminal vesicle epithelial cells are assumed to secrete proteins involved in decapacitation by modifying surface proteins to facilitate the acquisition of the ability to fertilize the egg. This is Solute carrier organic anion transporter family member 4C1 from Pongo abelii (Sumatran orangutan).